We begin with the raw amino-acid sequence, 104 residues long: Large ribosomal subunit protein uL24 (104 aa).

This sequence belongs to the universal ribosomal protein uL24 family. As to quaternary structure, part of the 50S ribosomal subunit.

Functionally, one of two assembly initiator proteins, it binds directly to the 5'-end of the 23S rRNA, where it nucleates assembly of the 50S subunit. In terms of biological role, one of the proteins that surrounds the polypeptide exit tunnel on the outside of the subunit. This Bradyrhizobium diazoefficiens (strain JCM 10833 / BCRC 13528 / IAM 13628 / NBRC 14792 / USDA 110) protein is Large ribosomal subunit protein uL24.